A 509-amino-acid polypeptide reads, in one-letter code: Activin receptor type-1 (509 aa).

The signal sequence occupies residues 1-20 (MVDGAMILSVLMMMALPSPS). The Extracellular segment spans residues 21 to 123 (MEDEEPKVNP…FPGSQNFHLE (103 aa)). N-linked (GlcNAc...) asparagine glycosylation is present at Asn-102. The chain crosses the membrane as a helical span at residues 124–146 (VGLIILSVVFAVCLFACILGVAL). Topologically, residues 147–509 (RKFKRRNQER…NSLDKLKTDC (363 aa)) are cytoplasmic. The region spanning 178–207 (STLAELLDHSCTSGSGSGLPFLVQRTVARQ) is the GS domain. The region spanning 208-502 (ITLLECVGKG…KTLTKIDNSL (295 aa)) is the Protein kinase domain. Residues 214-222 (VGKGRYGEV) and Lys-235 contribute to the ATP site. Asp-336 functions as the Proton acceptor in the catalytic mechanism. Ser-501 carries the phosphoserine modification.

It belongs to the protein kinase superfamily. TKL Ser/Thr protein kinase family. TGFB receptor subfamily. Interacts with FKBP1A. Interacts with FCHO1. Interacts with CLU. Interacts with type II receptors AMHR2 and ACVR2A. Interacts with BMP7. Interacts with GDF2/BMP9. Interacts with BMP6 (when glycosylated); the interaction may induce HAMP expression. Interacts with TSC22D1/TSC-22. Mg(2+) is required as a cofactor. The cofactor is Mn(2+). Urogenital ridge, testis, ovary, brain and lungs.

Its subcellular location is the membrane. It catalyses the reaction L-threonyl-[receptor-protein] + ATP = O-phospho-L-threonyl-[receptor-protein] + ADP + H(+). The catalysed reaction is L-seryl-[receptor-protein] + ATP = O-phospho-L-seryl-[receptor-protein] + ADP + H(+). Functionally, bone morphogenetic protein (BMP) type I receptor that is involved in a wide variety of biological processes, including bone, heart, cartilage, nervous, and reproductive system development and regulation. As a type I receptor, forms heterotetrameric receptor complexes with the type II receptors AMHR2, ACVR2A ors ACVR2B. Upon binding of ligands such as BMP7 or GDF2/BMP9 to the heteromeric complexes, type II receptors transphosphorylate ACVR1 intracellular domain. In turn, ACVR1 kinase domain is activated and subsequently phosphorylates SMAD1/5/8 proteins that transduce the signal. In addition to its role in mediating BMP pathway-specific signaling, suppresses TGFbeta/activin pathway signaling by interfering with the binding of activin to its type II receptor. Besides canonical SMAD signaling, can activate non-canonical pathways such as p38 mitogen-activated protein kinases/MAPKs. May promote the expression of HAMP, potentially via its interaction with BMP6. The sequence is that of Activin receptor type-1 (Acvr1) from Rattus norvegicus (Rat).